Reading from the N-terminus, the 424-residue chain is Tyrosine--tRNA ligase (424 aa).

Tyr37 is a binding site for L-tyrosine. A 'HIGH' region motif is present at residues 42-51 (PTADSLHLGH). Lys144 carries the N6-acetyllysine modification. 2 residues coordinate L-tyrosine: Tyr175 and Gln179. The short motif at 235–239 (KFGKT) is the 'KMSKS' region element. Lys238 is an ATP binding site. An S4 RNA-binding domain is found at 357–414 (ADLMQALVDSELQPSRGQARKTIASNAITINGEKQSDPEYFFKEEDRLFGRFTLLRRG).

Belongs to the class-I aminoacyl-tRNA synthetase family. TyrS type 1 subfamily. As to quaternary structure, homodimer.

It localises to the cytoplasm. It carries out the reaction tRNA(Tyr) + L-tyrosine + ATP = L-tyrosyl-tRNA(Tyr) + AMP + diphosphate + H(+). In terms of biological role, catalyzes the attachment of tyrosine to tRNA(Tyr) in a two-step reaction: tyrosine is first activated by ATP to form Tyr-AMP and then transferred to the acceptor end of tRNA(Tyr). In Shigella flexneri serotype 5b (strain 8401), this protein is Tyrosine--tRNA ligase.